The primary structure comprises 146 residues: UPF0178 protein OB0454 (146 aa).

It belongs to the UPF0178 family.

This chain is UPF0178 protein OB0454, found in Oceanobacillus iheyensis (strain DSM 14371 / CIP 107618 / JCM 11309 / KCTC 3954 / HTE831).